Consider the following 66-residue polypeptide: UPF0337 protein SpyM3_1723 (66 aa).

A compositionally biased stretch (basic and acidic residues) spans 1–10; that stretch reads MSEEKLKSKI. Positions 1 to 23 are disordered; that stretch reads MSEEKLKSKIEQASGGLKEGAGK.

The protein belongs to the UPF0337 (CsbD) family.

The polypeptide is UPF0337 protein SpyM3_1723 (Streptococcus pyogenes serotype M3 (strain ATCC BAA-595 / MGAS315)).